A 548-amino-acid chain; its full sequence is Natural resistance-associated macrophage protein 1 (548 aa).

The tract at residues 1 to 38 (MSGDTGPPKQGGTRYGSISSPPSPEPQQAPPGGTYLSE) is disordered. The Cytoplasmic segment spans residues 1-55 (MSGDTGPPKQGGTRYGSISSPPSPEPQQAPPGGTYLSEKIPIPDTESGTFSLRKL). Residues 56–73 (WAFTGPGFLMSIAFLDPG) form a helical membrane-spanning segment. At 74–82 (NIESDLQAG) the chain is on the extracellular side. The chain crosses the membrane as a helical span at residues 83–102 (AVAGFKLLWVLLWATVLGLL). The Cytoplasmic portion of the chain corresponds to 103–139 (CQRLAARLGVVTGKDLGEVCHLYYPKVPRILLWLTIE). The chain crosses the membrane as a helical span at residues 140 to 160 (LAIVGSDMQEVIGTAIAFSLL). Residues 161–164 (SAGR) are Extracellular-facing. A helical transmembrane segment spans residues 165–184 (IPLWGGVLITVVDTFFFLFL). Over 185–193 (DNYGLRKLE) the chain is Cytoplasmic. A helical transmembrane segment spans residues 194–214 (AFFGFLITIMALTFGYEYVVA). Residues 215-237 (QPAQGALLQGLFLPSCPGCGQPE) lie on the Extracellular side of the membrane. A helical transmembrane segment spans residues 238–256 (LLQAVGIIGAIIMPHNIYL). Residues 257–284 (HSSLVKSREVDRSRRADIREANMYFLIE) are Cytoplasmic-facing. The helical transmembrane segment at 285–304 (ATIALSVSFLINLFVMAVFG) threads the bilayer. The Extracellular portion of the chain corresponds to 305–346 (QAFYKQTNQAAFNICADSSLHDYAPIFPRNNLTVAVDIYQGG). Residue Asn335 is glycosylated (N-linked (GlcNAc...) asparagine). Residues 347–366 (VILGCLFGPPALYIWAVGLL) form a helical membrane-spanning segment. At 367–397 (AAGQSSTMTGTYAGQFVMEGFLKLRWSRFAR) the chain is on the cytoplasmic side. A helical transmembrane segment spans residues 398–415 (VLLTRSCAILPTVLLAVF). At 416-426 (RDLRDLSGLND) the chain is on the extracellular side. Residues 427 to 447 (LLNVLQSLLLPFAVLPILTFT) traverse the membrane as a helical segment. The Cytoplasmic segment spans residues 448-463 (SMPALMQEFANGLVSK). Residues 464-485 (VITSSIMVLVCAVNLYFVISYL) form a helical membrane-spanning segment. At 486–493 (PSLPHPAY) the chain is on the extracellular side. The chain crosses the membrane as a helical span at residues 494–513 (FSLVALLAAAYLGLTTYLVW). At 514–548 (TCLITQGATLLAHSSHQRFLYGLPEEDQEKGRTSG) the chain is on the cytoplasmic side.

The protein belongs to the NRAMP family.

It localises to the late endosome membrane. It is found in the lysosome membrane. The catalysed reaction is Zn(2+)(in) + H(+)(out) = Zn(2+)(out) + H(+)(in). It carries out the reaction Fe(2+)(in) + H(+)(out) = Fe(2+)(out) + H(+)(in). It catalyses the reaction Mn(2+)(in) + H(+)(out) = Mn(2+)(out) + H(+)(in). Its function is as follows. Macrophage-specific antiporter that fluxes metal ions in either direction against a proton gradient. Localized to late endosomal lysosomal membranes, delivers bivalent cations from the cytosol into these acidic compartments where they may directly affect antimicrobial activity. Involved in iron metabolism and host natural resistance to infection with intracellular parasites. Pathogen resistance involves sequestration of Fe(2+) and Mn(2+), cofactors of both prokaryotic and eukaryotic catalases and superoxide dismutases, not only to protect the macrophage against its own generation of reactive oxygen species, but to deny the cations to the pathogen for synthesis of its protective enzymes. In Bos taurus (Bovine), this protein is Natural resistance-associated macrophage protein 1 (SLC11A1).